A 129-amino-acid chain; its full sequence is Fluoride-specific ion channel FluC 2 (129 aa).

Transmembrane regions (helical) follow at residues 3–23 (FLYV…MNLW), 32–52 (ATLA…QFLA), 59–79 (LVIL…FSAF), and 90–110 (GAWL…LIMV). Residues Gly71 and Thr74 each coordinate Na(+).

Belongs to the fluoride channel Fluc/FEX (TC 1.A.43) family.

It localises to the cell membrane. The catalysed reaction is fluoride(in) = fluoride(out). With respect to regulation, na(+) is not transported, but it plays an essential structural role and its presence is essential for fluoride channel function. Functionally, fluoride-specific ion channel. Important for reducing fluoride concentration in the cell, thus reducing its toxicity. The polypeptide is Fluoride-specific ion channel FluC 2 (Listeria monocytogenes serotype 4b (strain F2365)).